We begin with the raw amino-acid sequence, 417 residues long: Dibenzothiophene monooxygenase (417 aa).

Residues Y96, 129–134 (NASSEN), 159–163 (KHFCS), R282, 369–370 (AR), and H391 contribute to the FMN site. Residues 131 to 142 (SSENNSHVLDWK) are lid loop.

This sequence belongs to the DszC flavin monooxygenase family. As to quaternary structure, homotetramer. Homodimer. FAD is required as a cofactor. The cofactor is NADH.

Its subcellular location is the cytoplasm. It carries out the reaction dibenzothiophene + 2 FMNH2 + 2 O2 = dibenzothiophene 5,5-dioxide + 2 FMN + 2 H2O + 2 H(+). The catalysed reaction is dibenzothiophene + FMNH2 + O2 = dibenzothiophene 5-oxide + FMN + H2O + H(+). The enzyme catalyses dibenzothiophene 5-oxide + FMNH2 + O2 = dibenzothiophene 5,5-dioxide + FMN + H2O + H(+). It functions in the pathway sulfur metabolism; dibenzothiophene degradation. Catalyzes the first step of the '4S' desulfurization pathway that removes covalently bound sulfur from dibenzothiophene (DBT) without breaking carbon-carbon bonds. Sulfur dioxygenase which converts DBT to DBT-sulfone (DBTO2 or DBT 5,5-dioxide) in a stepwise manner. In DBTO (dibenzothiophene-5-oxide) was reported not to be a substrate, in it is reported to be a substrate. Can also use benzyl sulfide and benzyl sulfoxide as substrates, although benzyl sulfoxide is a poor substrate. The pathway substrate specificity has been augmented using mutagenesis, however no mutations allowed use of alkylated thiophenes. The polypeptide is Dibenzothiophene monooxygenase (Rhodococcus qingshengii).